A 274-amino-acid polypeptide reads, in one-letter code: Protein TIFY 11A (274 aa).

2 disordered regions span residues 49–95 (SLAL…SQPG) and 139–176 (PINDENNNNKSSMVLPDLNEPTDNNHLTKEQQQQQEQN). Residues 92-127 (SQPGSSQLTIFFGGKVLVYNEFPVDKAKEIMEVAKQ) form the Tify domain. The span at 139–150 (PINDENNNNKSS) shows a compositional bias: polar residues. The stretch at 161-185 (DNNHLTKEQQQQQEQNQIVERIARR) forms a coiled coil. The Jas motif lies at 182–206 (IARRASLHRFFAKRKDRAVARAPYQ). A Nuclear localization signal motif is present at residues 183–190 (ARRASLHR). Residues 206–274 (QVNQNAGHHR…QSSKDLDLRL (69 aa)) form a disordered region. Residues 249–274 (IKSDGDKDDIMKIEEGQSSKDLDLRL) show a composition bias toward basic and acidic residues.

The protein belongs to the TIFY/JAZ family. Homo- and heterodimer. Interacts with MYC2, MYC3, MYC4, AFPH2/NINJA, TIFY10A/JAZ1, TIFY10B/JAZ2, TIFY11B/JAZ6, TIFY5A/JAZ8 and TIFY3B/JAZ12. As to quaternary structure, (Microbial infection) Interacts with the pathogenic Pseudomonas syringae HopZ1a protein. (Microbial infection) Acetylated by Pseudomonas syringae HopZ1a. Post-translationally, ubiquitinated. Targeted for degradation by the SCF(COI1) E3 ubiquitin ligase-proteasome pathway during jasmonate signaling.

The protein resides in the nucleus. Repressor of jasmonate responses. The sequence is that of Protein TIFY 11A from Arabidopsis thaliana (Mouse-ear cress).